Consider the following 514-residue polypeptide: Importin subunit alpha-3 (514 aa).

The region spanning 1–51 (MSSNRQAYYKNNAKEQIGKEKRNEEVVSIRKDKREEAISKRRNINTQIEDD) is the IBB domain. Positions 1 to 62 (MSSNRQAYYK…ETSTTPPGPF (62 aa)) are disordered. Over residues 12 to 39 (NAKEQIGKEKRNEEVVSIRKDKREEAIS) the composition is skewed to basic and acidic residues. ARM repeat units lie at residues 101-142 (IDDL…TSEQ), 143-187 (TQAV…FRDY), 188-226 (CLEL…CKDP), 227-271 (APSP…EHIQ), 272-311 (MVIE…TDEQ), 312-353 (TQLV…NQQQ), 354-393 (VQDV…ISGR), and 394-436 (PNQV…KMAG). The interval 485–514 (GNVEGAQSSAFGGDVPPVPDAPNGGWNFGK) is disordered.

This sequence belongs to the importin alpha family. As to quaternary structure, forms a complex with an importin beta subunit. May interact with transcription factor cebp-1 (via N-terminus). Interacts with cmk-1; affinity for cmk-1 is increased in the presence of Ca(2+) and calmodulin and leads to increased nuclear accumulation of cmk-1 in FLP neurons upon prolonged heat activation. As to expression, expressed in larval and adult germline and somatic tissues, including neurons.

It localises to the cytoplasm. Its subcellular location is the nucleus. Binds specifically and directly to substrates containing either a simple or bipartite NLS motif. Promotes docking of import substrates to the nuclear envelope. Seems to act as a cytosolic receptor for both simple and bipartite NLS motifs. Necessary for correct nucleoporin localization within the germline. Essential gene for embryonic and larval development. May be dispensable for axon development, but required for axon regeneration in both mechanosensory and motor neurons. Required for oogenic development, ima-1 and ima-2 cannot functionally compensate for loss of ima-3. This Caenorhabditis elegans protein is Importin subunit alpha-3 (ima-3).